The following is an 800-amino-acid chain: Elongation factor G, mitochondrial (800 aa).

The N-terminal 34 residues, 1–34, are a transit peptide targeting the mitochondrion; that stretch reads MSVHTVMRTQVRSLAGMPKAAMRPLGNSFCARRY. Residues 99–385 enclose the tr-type G domain; the sequence is SKVRNIGIAA…GICDYLPNPA (287 aa). GTP-binding positions include 108 to 115, 183 to 187, and 237 to 240; these read AHIDSGKT, DTPGH, and NKMD.

The protein belongs to the TRAFAC class translation factor GTPase superfamily. Classic translation factor GTPase family. EF-G/EF-2 subfamily.

It is found in the mitochondrion. Its pathway is protein biosynthesis; polypeptide chain elongation. In terms of biological role, mitochondrial GTPase that catalyzes the GTP-dependent ribosomal translocation step during translation elongation. During this step, the ribosome changes from the pre-translocational (PRE) to the post-translocational (POST) state as the newly formed A-site-bound peptidyl-tRNA and P-site-bound deacylated tRNA move to the P and E sites, respectively. Catalyzes the coordinated movement of the two tRNA molecules, the mRNA and conformational changes in the ribosome. The protein is Elongation factor G, mitochondrial of Coccidioides immitis (strain RS) (Valley fever fungus).